Reading from the N-terminus, the 232-residue chain is MEQGAEDIPVVYLHDIKRQYSQGEATLTILDGAKLALWAGQSVALVAPSGSGKSTLLHIAGLLEHPDEGEVYVSGAATSALTDAERTQIRRTDIGFVYQSHRLLPEFTALENVMLPQMIRGLKRKETISRSKEILSYLGLADRITHRPSELSGGEQQRVAIARAVANAPRVLFADEPTGNLDPHTADYVFNALMQLVKATQVAMLIATHNMELAARMDRRVSLQDGVVVELE.

In terms of domain architecture, ABC transporter spans 11 to 231; the sequence is VYLHDIKRQY…SLQDGVVVEL (221 aa). 47-54 is a binding site for ATP; it reads APSGSGKS.

It belongs to the ABC transporter superfamily. Lipoprotein translocase (TC 3.A.1.125) family. As to quaternary structure, the complex is composed of two ATP-binding proteins (LolD) and two transmembrane proteins (LolC and LolE).

It localises to the cell inner membrane. In terms of biological role, part of the ABC transporter complex LolCDE involved in the translocation of mature outer membrane-directed lipoproteins, from the inner membrane to the periplasmic chaperone, LolA. Responsible for the formation of the LolA-lipoprotein complex in an ATP-dependent manner. This Rhodopseudomonas palustris (strain ATCC BAA-98 / CGA009) protein is Lipoprotein-releasing system ATP-binding protein LolD 2.